The chain runs to 372 residues: Homoserine O-acetyltransferase (372 aa).

The region spanning 43 to 353 (NAILIFHALT…DKGHDSFLLK (311 aa)) is the AB hydrolase-1 domain. The active-site Nucleophile is the serine 148. Residue arginine 218 participates in substrate binding. Catalysis depends on residues aspartate 314 and histidine 347. Residue aspartate 348 coordinates substrate.

Belongs to the AB hydrolase superfamily. MetX family. As to quaternary structure, homodimer.

It is found in the cytoplasm. The catalysed reaction is L-homoserine + acetyl-CoA = O-acetyl-L-homoserine + CoA. It participates in amino-acid biosynthesis; L-methionine biosynthesis via de novo pathway; O-acetyl-L-homoserine from L-homoserine: step 1/1. Transfers an acetyl group from acetyl-CoA to L-homoserine, forming acetyl-L-homoserine. This chain is Homoserine O-acetyltransferase, found in Pelagibacter ubique (strain HTCC1062).